A 510-amino-acid chain; its full sequence is Cytochrome P450 monooxygenase macH (510 aa).

Residues Leu-7–Tyr-29 form a helical membrane-spanning segment. Cys-454 provides a ligand contact to heme.

This sequence belongs to the cytochrome P450 family. Heme is required as a cofactor.

It localises to the membrane. The protein operates within secondary metabolite biosynthesis; terpenoid biosynthesis. Cytochrome P450 monooxygenase; part of the gene cluster that mediates the biosynthesis of macrophorins, isoprenoid epoxycyclohexenones containing cyclized drimane moieties. The first step of the pathway is the synthesis of 6-methylsalicylic acid (6-MSA) by the polyketide synthase macA. 6-MSA is then converted to m-cresol by the decarboxylase macB. The cytochrome P450 monooxygenase macC then catalyzes the oxidation of m-cresol to toluquinol. Epoxidation of toluquinol is then performed by the short chain dehydrogenase macD, with the help of macE, and a further prenylation by macG leads to 7-deacetoxyyanuthone A. The next step is the hydroxylation of C-22 of 7-deacetoxyyanuthone A by the cytochrome P450 monooxygenase macH to yield 22-deacetylyanuthone A. O-Mevalon transferase macI then attaches mevalon to the hydroxyl group of 22-deacetylyanuthone A to produce yanuthone E. The terpene cyclase macJ catalyzes the cyclization of 22-deacetylyanuthone A to macrophorin A. MacJ is also able to catalyze cyclization of yanuthone E and 7-deacetoxyyanuthone A to their corresponding macrophorins. The macJ products can be further modified by macH and macJ, as well as by the FAD-dependent monooxygenase macF, to produce additional macrophorins, including 4'-oxomacrophorin A, 4'-oxomacrophorin D and 4'-oxomacrophorin E. This chain is Cytochrome P450 monooxygenase macH, found in Penicillium terrestre.